Reading from the N-terminus, the 26-residue chain is Mucus envelope protein (26 aa).

Post-translationally, glycosylated. As to expression, produced by the opercular gland in the gill cavity and secreted as part of the mucus cocoon.

Its subcellular location is the secreted. Functionally, exhibits antibacterial activity. May play a role in protection against parasite settlement. The sequence is that of Mucus envelope protein from Scarus vetula (Queen parrotfish).